The primary structure comprises 206 residues: Imidazole glycerol phosphate synthase subunit HisH (206 aa).

The Glutamine amidotransferase type-1 domain occupies 5–206 (SVVVLDYGSG…AVLSNWVDGL (202 aa)). C83 serves as the catalytic Nucleophile. Residues H187 and E189 contribute to the active site.

As to quaternary structure, heterodimer of HisH and HisF.

The protein localises to the cytoplasm. It carries out the reaction 5-[(5-phospho-1-deoxy-D-ribulos-1-ylimino)methylamino]-1-(5-phospho-beta-D-ribosyl)imidazole-4-carboxamide + L-glutamine = D-erythro-1-(imidazol-4-yl)glycerol 3-phosphate + 5-amino-1-(5-phospho-beta-D-ribosyl)imidazole-4-carboxamide + L-glutamate + H(+). The enzyme catalyses L-glutamine + H2O = L-glutamate + NH4(+). It participates in amino-acid biosynthesis; L-histidine biosynthesis; L-histidine from 5-phospho-alpha-D-ribose 1-diphosphate: step 5/9. Functionally, IGPS catalyzes the conversion of PRFAR and glutamine to IGP, AICAR and glutamate. The HisH subunit catalyzes the hydrolysis of glutamine to glutamate and ammonia as part of the synthesis of IGP and AICAR. The resulting ammonia molecule is channeled to the active site of HisF. The polypeptide is Imidazole glycerol phosphate synthase subunit HisH (hisH) (Mycobacterium bovis (strain ATCC BAA-935 / AF2122/97)).